The sequence spans 68 residues: Large ribosomal subunit protein bL32 (68 aa).

The segment at 1-24 (MAVPQNRVTRSRRNMRRSHDALVA) is disordered.

It belongs to the bacterial ribosomal protein bL32 family.

The protein is Large ribosomal subunit protein bL32 of Paracoccus denitrificans (strain Pd 1222).